The sequence spans 589 residues: Pyruvate kinase (589 aa).

Substrate is bound at residue Arg32. Asn34, Ser36, Asp66, and Thr67 together coordinate K(+). Residue 34 to 37 participates in ATP binding; sequence NFSH. Positions 73 and 157 each coordinate ATP. Residue Glu223 coordinates Mg(2+). Substrate contacts are provided by Gly246, Asp247, and Thr279. Mg(2+) is bound at residue Asp247.

Belongs to the pyruvate kinase family. It in the C-terminal section; belongs to the PEP-utilizing enzyme family. In terms of assembly, homotetramer. The cofactor is Mg(2+). K(+) serves as cofactor.

It carries out the reaction pyruvate + ATP = phosphoenolpyruvate + ADP + H(+). Its pathway is carbohydrate degradation; glycolysis; pyruvate from D-glyceraldehyde 3-phosphate: step 5/5. Its activity is regulated as follows. Strongly activated by glucose-6-phosphate, ribose-5-phosphate and fructose-6-phosphate. Weak activator AMP and weak inhibitor fructose-1,6-bisphosphate can act as strong inhibitors in the presence of strong activators. The protein is Pyruvate kinase (pyk) of Lactobacillus delbrueckii subsp. bulgaricus.